A 607-amino-acid chain; its full sequence is Elongation factor 4 (607 aa).

The tr-type G domain occupies 11-193 (EKIRNFSIIA…QIVEKVPAPQ (183 aa)). GTP contacts are provided by residues 23–28 (DHGKST) and 140–143 (NKID).

It belongs to the TRAFAC class translation factor GTPase superfamily. Classic translation factor GTPase family. LepA subfamily.

The protein resides in the cell membrane. It catalyses the reaction GTP + H2O = GDP + phosphate + H(+). Its function is as follows. Required for accurate and efficient protein synthesis under certain stress conditions. May act as a fidelity factor of the translation reaction, by catalyzing a one-codon backward translocation of tRNAs on improperly translocated ribosomes. Back-translocation proceeds from a post-translocation (POST) complex to a pre-translocation (PRE) complex, thus giving elongation factor G a second chance to translocate the tRNAs correctly. Binds to ribosomes in a GTP-dependent manner. This chain is Elongation factor 4, found in Lactococcus lactis subsp. lactis (strain IL1403) (Streptococcus lactis).